Here is a 488-residue protein sequence, read N- to C-terminus: Mannosylglycerate hydrolase MGH2 (488 aa).

Substrate is bound by residues Tyr-94, 98–101 (WNWD), Tyr-146, Gln-167, and Gly-227. Residue Asp-229 is the Proton donor of the active site. Residues Arg-262 and 415 to 416 (YW) contribute to the substrate site. Glu-459 (proton acceptor) is an active-site residue.

This sequence belongs to the glycosyl hydrolase 63 family.

The enzyme catalyses (2R)-2-O-(alpha-D-mannosyl)-glycerate + H2O = D-mannose + (R)-glycerate. It carries out the reaction (2R)-2-O-(alpha-D-glucopyranosyl)-glycerate + H2O = (R)-glycerate + D-glucose. Activity is not dependent on divalent cations, but it is enhanced by Mn(2+). Its function is as follows. Catalyzes the hydrolysis of alpha-D-mannosyl-glycerate (MG) to D-glycerate and D-mannose. Can also hydrolyze alpha-D-glucopyranosyl-glycerate (GG)with lower efficiency. This is Mannosylglycerate hydrolase MGH2 from Selaginella moellendorffii (Spikemoss).